Consider the following 181-residue polypeptide: Large ribosomal subunit protein uL5 (181 aa).

The protein belongs to the universal ribosomal protein uL5 family. In terms of assembly, part of the 50S ribosomal subunit; part of the 5S rRNA/L5/L18/L25 subcomplex. Contacts the 5S rRNA and the P site tRNA. Forms a bridge to the 30S subunit in the 70S ribosome.

This is one of the proteins that bind and probably mediate the attachment of the 5S RNA into the large ribosomal subunit, where it forms part of the central protuberance. In the 70S ribosome it contacts protein S13 of the 30S subunit (bridge B1b), connecting the 2 subunits; this bridge is implicated in subunit movement. Contacts the P site tRNA; the 5S rRNA and some of its associated proteins might help stabilize positioning of ribosome-bound tRNAs. In Campylobacter hominis (strain ATCC BAA-381 / DSM 21671 / CCUG 45161 / LMG 19568 / NCTC 13146 / CH001A), this protein is Large ribosomal subunit protein uL5.